The primary structure comprises 856 residues: Dynamin-1 (856 aa).

Residues 28–294 (DLDLPQIAVV…LTNHIRDTLP (267 aa)) form the Dynamin-type G domain. The segment at 38–45 (GGQSAGKS) is G1 motif. The GDP site is built by Ser41, Gly43, Lys44, Ser45, Ser46, Arg59, and Gly60. Residues 64 to 66 (VTR) form a G2 motif region. Residue Tyr80 is modified to Phosphotyrosine. Tyr125 is modified (3'-nitrotyrosine; alternate). At Tyr125 the chain carries Phosphotyrosine; alternate. The G3 motif stretch occupies residues 136–139 (DLPG). Positions 205 to 208 (TKLD) are G4 motif. GDP-binding residues include Lys206, Asp208, Asp211, Asn236, Arg237, and Gln239. The tract at residues 235–238 (VNRS) is G5 motif. Phosphoserine is present on residues Ser306 and Ser347. Position 354 is a phosphotyrosine (Tyr354). At Ser512 the chain carries Phosphoserine. One can recognise a PH domain in the interval 519–625 (LVIRKGWLTI…WKASFLRAGV (107 aa)). The 92-residue stretch at 659 to 750 (VETIRNLVDS…IIGDINTTTV (92 aa)) folds into the GED domain. A disordered region spans residues 750-856 (VSTPMPPPVD…PIGSGKSIPS (107 aa)). The span at 763 to 781 (LQVQSVPTGRRSPTSSPTP) shows a compositional bias: polar residues. Phosphoserine is present on residues Ser774 and Ser778. The residue at position 796 (Arg796) is an Omega-N-methylarginine. Ser822 carries the post-translational modification Phosphoserine. The segment covering 825-844 (PFGPPPQVPSRPNRAPPGVP) has biased composition (pro residues).

Belongs to the TRAFAC class dynamin-like GTPase superfamily. Dynamin/Fzo/YdjA family. In terms of assembly, homodimer; homodimerization is mediated by the dynamin-type G domain which promotes assembly-stimulated GTPase activity. Homo-tetramer formed from two dimers in the absence of lipid. Oligomerizes into a helical polymer that self-assembles around the vesicle membrane, when associated to the menbrane through lipid binding. Interacts (via C-terminal proline-rich domain (PRD)) with SNX9 (via SH3 domain); this interaction allows regulation of DNM1 self-assembly during late stages of endocytic vesicle formation and supports DNM1's early functions in accelerating clathrin-coated pits (CCPs) maturation in non neuronals cell. Interacts (via C-terminal proline-rich domain (PRD)) with MYO1E (via SH3 domain); this interaction regulates receptor-mediated endocytosis. Interacts with SNX33 (via SH3 domain); this interaction decreases DNM1-dependent endocytosis. Interacts with DIAPH1. Interacts with GRB2 (via SH3 domain); this interaction mediates disassembly of DNM1 polymers, therefore modulates self-assembly. Forms a complex with BIN1 (via SH3 domain) and SH3GL2 (via SH3 domain). Forms a complex with SH3GL2 (via SH3 domain) and AMPH (via SH3 domain). Forms a complex with SH3GL2 (via SH3 domain) and SYNJ1. Interacts with AMPH. Interacts (via C-terminal proline-rich domain (PRD)) with SYT1; this interaction facilitates vesicle fission during clathrin-mediated endocytosis (CME). Interacts (via C-terminal proline-rich domain (PRD)) with PLCG1 (via SH3 domain); this interaction stimulates the release of GDP from DNM1 and enhances DNM1-dependent endocytosis. Interacts with SNPH; this interaction inhibits the binding of DNM1 to AMPH and DNM1-receptor-mediated endocytosis. Interacts with CAV1. Interacts with SH3GLB1 (via SH3 domain). Interacts with PACSIN1 (via SH3 domain), PACSIN2 (via SH3 domain) and PACSIN3 (via SH3 domain). Interacts with UNC119; this interaction decreases DNM1's GTPase activity and affects DNM1's interaction with AMPH. Interacts with AMPH. Interacts (GTP-bound form) with DNAJC6; this interaction allows clathrin-coated vesicle (CCV) formation at the plasma membrane. Post-translationally, phosphorylation at Ser-774 by GSK3B/GSK3-beta leads to inactivation of receptor-mediated endocytosis in non-neuronal cells. Dephosphorylation at Ser-774, through the EGFR downstream signaling, leads to activation and regulates early stages of clathrin-mediated endocytosis (CME).

It is found in the cell membrane. It localises to the membrane. Its subcellular location is the clathrin-coated pit. The protein localises to the cytoplasmic vesicle. The protein resides in the presynapse. It is found in the secretory vesicle. It localises to the chromaffin granule. The catalysed reaction is GTP + H2O = GDP + phosphate + H(+). Catalyzes the hydrolysis of GTP and utilizes this energy to mediate vesicle scission and participates in many forms of endocytosis, such as clathrin-mediated endocytosis or synaptic vesicle endocytosis as well as rapid endocytosis (RE). Associates to the membrane, through lipid binding, and self-assembles into rings and stacks of interconnected rings through oligomerization to form a helical polymer around the vesicle membrane leading to constriction of invaginated coated pits around their necks. Self-assembly of the helical polymer induces membrane tubules narrowing until the polymer reaches a length sufficient to trigger GTP hydrolysis. Depending on the curvature imposed on the tubules, membrane detachment from the helical polymer upon GTP hydrolysis can cause spontaneous hemifission followed by complete fission. May play a role in regulating early stages of clathrin-mediated endocytosis in non-neuronal cells through its activation by dephosphorylation via the signaling downstream of EGFR. Controls vesicle size at a step before fission, during formation of membrane pits, at hippocampal synapses. Controls plastic adaptation of the synaptic vesicle recycling machinery to high levels of activity. Mediates rapid endocytosis (RE), a Ca(2+)-dependent and clathrin- and K(+)-independent process in chromaffin cells. Microtubule-associated force-producing protein involved in producing microtubule bundles and able to bind and hydrolyze GTP. Through its interaction with DNAJC6, acts during the early steps of clathrin-coated vesicle (CCV) formation. The polypeptide is Dynamin-1 (Bos taurus (Bovine)).